Here is a 444-residue protein sequence, read N- to C-terminus: Argininosuccinate synthase (444 aa).

Residues 18–26 (AFSGGLDTS) and alanine 44 each bind ATP. Tyrosine 100 contacts L-citrulline. Glycine 130 and threonine 132 together coordinate ATP. The L-aspartate site is built by threonine 132, asparagine 136, and aspartate 137. Position 136 (asparagine 136) interacts with L-citrulline. ATP is bound at residue aspartate 137. Positions 140 and 193 each coordinate L-citrulline. Aspartate 195 provides a ligand contact to ATP. Threonine 202, glutamate 204, and glutamate 281 together coordinate L-citrulline.

The protein belongs to the argininosuccinate synthase family. Type 2 subfamily. Homotetramer.

It localises to the cytoplasm. The enzyme catalyses L-citrulline + L-aspartate + ATP = 2-(N(omega)-L-arginino)succinate + AMP + diphosphate + H(+). The protein operates within amino-acid biosynthesis; L-arginine biosynthesis; L-arginine from L-ornithine and carbamoyl phosphate: step 2/3. This Mannheimia succiniciproducens (strain KCTC 0769BP / MBEL55E) protein is Argininosuccinate synthase.